Here is a 212-residue protein sequence, read N- to C-terminus: Large ribosomal subunit protein uL1 (212 aa).

The protein belongs to the universal ribosomal protein uL1 family. In terms of assembly, part of the 50S ribosomal subunit.

Its function is as follows. Binds directly to 23S rRNA. Probably involved in E site tRNA release. In terms of biological role, protein L1 is also a translational repressor protein, it controls the translation of its operon by binding to its mRNA. The chain is Large ribosomal subunit protein uL1 from Methanothermobacter thermautotrophicus (strain ATCC 29096 / DSM 1053 / JCM 10044 / NBRC 100330 / Delta H) (Methanobacterium thermoautotrophicum).